The primary structure comprises 238 residues: Ribonuclease HII (238 aa).

The RNase H type-2 domain occupies 12-197; it reads GIVAGVDEAG…VLELLTDDLL (186 aa). A divalent metal cation-binding residues include D18, E19, and D107.

Belongs to the RNase HII family. Mn(2+) is required as a cofactor. The cofactor is Mg(2+).

Its subcellular location is the cytoplasm. It carries out the reaction Endonucleolytic cleavage to 5'-phosphomonoester.. Functionally, endonuclease that specifically degrades the RNA of RNA-DNA hybrids. This Thermotoga petrophila (strain ATCC BAA-488 / DSM 13995 / JCM 10881 / RKU-1) protein is Ribonuclease HII.